The chain runs to 70 residues: Putative membrane protein insertion efficiency factor (70 aa).

Belongs to the UPF0161 family.

The protein resides in the cell inner membrane. Could be involved in insertion of integral membrane proteins into the membrane. The polypeptide is Putative membrane protein insertion efficiency factor (Geobacter sp. (strain M21)).